A 105-amino-acid chain; its full sequence is Nitrogenase-stabilizing/protective protein NifW 2 (105 aa).

This sequence belongs to the NifW family.

Its function is as follows. May protect the nitrogenase Fe-Mo protein from oxidative damage. The protein is Nitrogenase-stabilizing/protective protein NifW 2 (nifW2) of Trichormus variabilis (strain ATCC 29413 / PCC 7937) (Anabaena variabilis).